A 259-amino-acid polypeptide reads, in one-letter code: MAARRVLKAVLVDLSGTLHIEDAAVPGAQEALKRLRAASVMVRFVTNTTKESKRDLLERLRKLEFDISEEEIFTSLTAARNLIEQRQVRPMLLVDDRALPDFTGVQTHDPNAVVIGLAPEHFHYQLLNEAFRLLLDGAPLIAIHKARYYKRKDGLALGPGPFVTALEYATDTKAVVVGKPEKTFFLEALRDTDCAPEEAVMIGDDCRDDVDGAQNIGMLGILVKTGKYKAADEEKINPPPYLTCESFPHAVDHILQHLL.

Residues aspartate 13 and serine 15 each coordinate Mg(2+). Residues 13–15 (DLS) and 46–47 (TN) each bind substrate. A coiled-coil region spans residues 49–71 (TKESKRDLLERLRKLEFDISEEE). The residue at position 50 (lysine 50) is an N6-succinyllysine. Position 179 (lysine 179) interacts with substrate. Position 204 (aspartate 204) interacts with Mg(2+).

The protein belongs to the HAD-like hydrolase superfamily. The cofactor is Mg(2+).

This chain is Haloacid dehalogenase-like hydrolase domain-containing protein 2 (Hdhd2), found in Rattus norvegicus (Rat).